A 303-amino-acid polypeptide reads, in one-letter code: N-acetyl-D-glucosamine kinase (303 aa).

Residues 4–11 (GFDIGGTK) and 133–140 (GVGGGLVL) each bind ATP. Zn(2+)-binding residues include H157, C177, C179, and C184.

Belongs to the ROK (NagC/XylR) family. NagK subfamily.

The enzyme catalyses N-acetyl-D-glucosamine + ATP = N-acetyl-D-glucosamine 6-phosphate + ADP + H(+). It functions in the pathway cell wall biogenesis; peptidoglycan recycling. Catalyzes the phosphorylation of N-acetyl-D-glucosamine (GlcNAc) derived from cell-wall degradation, yielding GlcNAc-6-P. This Citrobacter koseri (strain ATCC BAA-895 / CDC 4225-83 / SGSC4696) protein is N-acetyl-D-glucosamine kinase.